A 332-amino-acid polypeptide reads, in one-letter code: Malate dehydrogenase, cytoplasmic (332 aa).

Residues 16-17 (QI), Asp-43, and Gly-90 each bind NAD(+). Arg-99 provides a ligand contact to oxaloacetate. Residues Gln-113 and Asn-132 each coordinate NAD(+). Oxaloacetate is bound by residues Asn-132, Arg-163, His-188, and Ser-243. The active-site Proton acceptor is His-188.

It belongs to the LDH/MDH superfamily. MDH type 2 family. In terms of assembly, homodimer.

The protein localises to the cytoplasm. It carries out the reaction (S)-malate + NAD(+) = oxaloacetate + NADH + H(+). In Medicago sativa (Alfalfa), this protein is Malate dehydrogenase, cytoplasmic (CMDH).